Consider the following 333-residue polypeptide: UPF0284 protein VNG_1572C (333 aa).

The protein belongs to the UPF0284 family.

This Halobacterium salinarum (strain ATCC 700922 / JCM 11081 / NRC-1) (Halobacterium halobium) protein is UPF0284 protein VNG_1572C.